We begin with the raw amino-acid sequence, 410 residues long: Interstrand DNA cross-link repair glycosylase (410 aa).

Positions 45 to 47 (QID) match the QXD; important for activity motif.

It belongs to the DNA glycosylase AlkZ-like family.

DNA glycosylase involved in the repair of interstrand DNA cross-links (ICLs), which are highly toxic DNA lesions that covalently tether the opposing strands of DNA, thereby inhibiting essential cellular processes such as DNA replication and transcription. Acts by unhooking both sides of the ICLs, forming abasic (AP) sites on both strands. Unhooks ICLs derived from various cross-linking agents, including azinomycin B (AZB) and mechlorethamine, also known as nitrogen mustard (NM), protecting cells from the toxicity of these cross-linking agents. In vitro, also acts on monoadducts and can catalyze the excision of N7-methylguanine (7mGua) from an oligonucleotide containing N7-methyldeoxyguanosine (d7mG). Shows no unhooking activity toward FaPy-ICLs. The chain is Interstrand DNA cross-link repair glycosylase (ycaQ) from Escherichia coli (strain K12).